The following is a 230-amino-acid chain: Type II restriction enzyme MjaV (230 aa).

It catalyses the reaction Endonucleolytic cleavage of DNA to give specific double-stranded fragments with terminal 5'-phosphates.. In terms of biological role, a P subtype restriction enzyme that recognizes the double-stranded sequence 5'-GTAC-3'; the cleavage site is unknown. In Methanocaldococcus jannaschii (strain ATCC 43067 / DSM 2661 / JAL-1 / JCM 10045 / NBRC 100440) (Methanococcus jannaschii), this protein is Type II restriction enzyme MjaV (mjaVR).